A 386-amino-acid chain; its full sequence is Na(+)/H(+) antiporter NhaA (386 aa).

10 consecutive transmembrane segments (helical) span residues 10–30 (EFSIPLLAGVLTALVWANVAP), 45–65 (LSFHFVTNDIFMAFFFAIAAV), 84–104 (LNPLLATAGGVVGPVGVYLAL), 116–136 (GWGIPTATDIAFAWLAARLIF), 142–162 (VIAFLLLLAIADDAIGLVIIA), 169–189 (VLPVAPPWLMLTAAGMLIAFI), 261–281 (IIVDFGLFMFGLANAGVGFSA), 287–307 (WLVFCALLFGKVTGIFVFALL), 323–343 (HLLVAGIIAGIGFTVALFVAG), and 358–378 (GAILSIAVFPVAMAAAKLLGI).

The protein belongs to the NhaA Na(+)/H(+) (TC 2.A.33) antiporter family.

Its subcellular location is the cell inner membrane. The enzyme catalyses Na(+)(in) + 2 H(+)(out) = Na(+)(out) + 2 H(+)(in). Functionally, na(+)/H(+) antiporter that extrudes sodium in exchange for external protons. The polypeptide is Na(+)/H(+) antiporter NhaA (Geotalea uraniireducens (strain Rf4) (Geobacter uraniireducens)).